A 210-amino-acid chain; its full sequence is GTP pyrophosphokinase YwaC (210 aa).

The protein belongs to the RelA/SpoT family. In terms of assembly, homotetramer.

The enzyme catalyses GTP + ATP = guanosine 3'-diphosphate 5'-triphosphate + AMP. It participates in purine metabolism; ppGpp biosynthesis; ppGpp from GTP: step 1/2. Functions as a (p)ppGpp synthase; GDP can be used instead of GTP, resulting in an increase of (p)ppGpp synthesis. Overexpression in relA mutants (triple relA-yjbM-ywaC deletions and single relA deletions) leads to growth arrest; GTP levels fall drastically, various guanine-related nucleotides are synthesized (ppGp or pGpp), the cellular transcriptional profile changes dramatically and 70S ribosome dimerization occurs. Overexpression in the presence of a wild-type relA gene does not have these effects. In eubacteria ppGpp (guanosine 3'-diphosphate 5'-diphosphate) is a mediator of the stringent response that coordinates a variety of cellular activities in response to changes in nutritional abundance. activities in response to changes in nutritional abundance. YwaC has probably a minor role in stringent response. This is GTP pyrophosphokinase YwaC (ywaC) from Bacillus subtilis (strain 168).